The following is a 30-amino-acid chain: Cyclotide hypa-A (30 aa).

Positions 1–30 (GIPCAESCVYIPCTITALLGCSCKNKVCYN) form a cross-link, cyclopeptide (Gly-Asn). 3 disulfides stabilise this stretch: Cys-4–Cys-21, Cys-8–Cys-23, and Cys-13–Cys-28.

In terms of processing, this is a cyclic peptide.

In terms of biological role, probably participates in a plant defense mechanism. In Pombalia parviflora (Violetilla), this protein is Cyclotide hypa-A.